We begin with the raw amino-acid sequence, 90 residues long: Molybdopterin synthase sulfur carrier subunit (90 aa).

Gly90 carries the 1-thioglycine; alternate modification. At Gly90 the chain carries Glycyl adenylate; alternate.

It belongs to the MoaD family. MOCS2A subfamily. Heterotetramer; composed of 2 small (Mocs2A) and 2 large (Mocs2B) subunits. C-terminal thiocarboxylation occurs in 2 steps, it is first acyl-adenylated (-COAMP) via the hesA/moeB/thiF part of MOCS3, then thiocarboxylated (-COSH) via the rhodanese domain of MOCS3.

It localises to the cytoplasm. It functions in the pathway cofactor biosynthesis; molybdopterin biosynthesis. In terms of biological role, acts as a sulfur carrier required for molybdopterin biosynthesis. Component of the molybdopterin synthase complex that catalyzes the conversion of precursor Z into molybdopterin by mediating the incorporation of 2 sulfur atoms into precursor Z to generate a dithiolene group. In the complex, serves as sulfur donor by being thiocarboxylated (-COSH) at its C-terminus by MOCS3. After interaction with Mocs2B, the sulfur is then transferred to precursor Z to form molybdopterin. The chain is Molybdopterin synthase sulfur carrier subunit from Drosophila sechellia (Fruit fly).